The primary structure comprises 190 residues: ATP synthase subunit delta (190 aa).

Belongs to the ATPase delta chain family. F-type ATPases have 2 components, F(1) - the catalytic core - and F(0) - the membrane proton channel. F(1) has five subunits: alpha(3), beta(3), gamma(1), delta(1), epsilon(1). F(0) has three main subunits: a(1), b(2) and c(10-14). The alpha and beta chains form an alternating ring which encloses part of the gamma chain. F(1) is attached to F(0) by a central stalk formed by the gamma and epsilon chains, while a peripheral stalk is formed by the delta and b chains.

The protein resides in the cell inner membrane. Its function is as follows. F(1)F(0) ATP synthase produces ATP from ADP in the presence of a proton or sodium gradient. F-type ATPases consist of two structural domains, F(1) containing the extramembraneous catalytic core and F(0) containing the membrane proton channel, linked together by a central stalk and a peripheral stalk. During catalysis, ATP synthesis in the catalytic domain of F(1) is coupled via a rotary mechanism of the central stalk subunits to proton translocation. Functionally, this protein is part of the stalk that links CF(0) to CF(1). It either transmits conformational changes from CF(0) to CF(1) or is implicated in proton conduction. This is ATP synthase subunit delta from Methylobacterium radiotolerans (strain ATCC 27329 / DSM 1819 / JCM 2831 / NBRC 15690 / NCIMB 10815 / 0-1).